The following is a 291-amino-acid chain: m-AAA protease-interacting protein 1, mitochondrial (291 aa).

Residues 1–96 (MALAARLLPQ…SFPACPQRSY (96 aa)) constitute a mitochondrion transit peptide.

As to quaternary structure, interacts with AFG3L2. Interacts with SPG7. Interacts with SMDT1/EMRE (via the N-terminal transit peptide); interaction is direct and takes place before maturation of SMDT1/EMRE.

The protein localises to the mitochondrion matrix. Functionally, promotes sorting of SMDT1/EMRE in mitochondria by ensuring its maturation. Interacts with the transit peptide region of SMDT1/EMRE precursor protein in the mitochondrial matrix, leading to protect it against protein degradation by YME1L1, thereby ensuring SMDT1/EMRE maturation by the mitochondrial processing peptidase (PMPCA and PMPCB). In Homo sapiens (Human), this protein is m-AAA protease-interacting protein 1, mitochondrial.